A 93-amino-acid polypeptide reads, in one-letter code: Small ribosomal subunit protein uS19 (93 aa).

This sequence belongs to the universal ribosomal protein uS19 family.

Functionally, protein S19 forms a complex with S13 that binds strongly to the 16S ribosomal RNA. This Mycobacteroides abscessus (strain ATCC 19977 / DSM 44196 / CCUG 20993 / CIP 104536 / JCM 13569 / NCTC 13031 / TMC 1543 / L948) (Mycobacterium abscessus) protein is Small ribosomal subunit protein uS19.